The chain runs to 204 residues: tRNA (guanine-N(7)-)-methyltransferase (204 aa).

E36, E61, and D111 together coordinate S-adenosyl-L-methionine. Residue D111 is part of the active site. Residues K115, D147, and T177–E180 contribute to the substrate site.

It belongs to the class I-like SAM-binding methyltransferase superfamily. TrmB family.

The enzyme catalyses guanosine(46) in tRNA + S-adenosyl-L-methionine = N(7)-methylguanosine(46) in tRNA + S-adenosyl-L-homocysteine. Its pathway is tRNA modification; N(7)-methylguanine-tRNA biosynthesis. Its function is as follows. Catalyzes the formation of N(7)-methylguanine at position 46 (m7G46) in tRNA. The sequence is that of tRNA (guanine-N(7)-)-methyltransferase from Chlorobium phaeobacteroides (strain DSM 266 / SMG 266 / 2430).